The chain runs to 557 residues: Probable asparagine synthetase [glutamine-hydrolyzing] (557 aa).

Cys2 acts as the For GATase activity in catalysis. One can recognise a Glutamine amidotransferase type-2 domain in the interval 2 to 188 (CGILAILNSL…PGHYFSSKTK (187 aa)). Residues 50 to 54 (RLAIV), 75 to 77 (NGE), and Asp101 contribute to the L-glutamine site. Residues 217-466 (AIKEAFEQAV…LPSSVLWRQK (250 aa)) form the Asparagine synthetase domain. Residues Leu239, Ile279, and 353-354 (SG) contribute to the ATP site. The tract at residues 538 to 557 (WGASQDPSGRAQKVHLSTTE) is disordered.

It catalyses the reaction L-aspartate + L-glutamine + ATP + H2O = L-asparagine + L-glutamate + AMP + diphosphate + H(+). Its pathway is amino-acid biosynthesis; L-asparagine biosynthesis; L-asparagine from L-aspartate (L-Gln route): step 1/1. The chain is Probable asparagine synthetase [glutamine-hydrolyzing] (asns) from Dictyostelium discoideum (Social amoeba).